The sequence spans 954 residues: Glycine dehydrogenase (decarboxylating) (954 aa).

Lys701 carries the post-translational modification N6-(pyridoxal phosphate)lysine.

It belongs to the GcvP family. As to quaternary structure, the glycine cleavage system is composed of four proteins: P, T, L and H. It depends on pyridoxal 5'-phosphate as a cofactor.

It catalyses the reaction N(6)-[(R)-lipoyl]-L-lysyl-[glycine-cleavage complex H protein] + glycine + H(+) = N(6)-[(R)-S(8)-aminomethyldihydrolipoyl]-L-lysyl-[glycine-cleavage complex H protein] + CO2. In terms of biological role, the glycine cleavage system catalyzes the degradation of glycine. The P protein binds the alpha-amino group of glycine through its pyridoxal phosphate cofactor; CO(2) is released and the remaining methylamine moiety is then transferred to the lipoamide cofactor of the H protein. This chain is Glycine dehydrogenase (decarboxylating), found in Bordetella parapertussis (strain 12822 / ATCC BAA-587 / NCTC 13253).